We begin with the raw amino-acid sequence, 349 residues long: NADH-ubiquinone oxidoreductase chain 2 (349 aa).

10 helical membrane passes run 3 to 23 (PYVL…TFAS), 25 to 45 (HWLL…PIMA), 66 to 86 (AAAM…EWEI), 98 to 118 (VMLA…LPEV), 149 to 171 (INSS…GGLN), 178 to 197 (ILAY…LQYA), 202 to 219 (LLSL…FLTL), 240 to 260 (LAAL…LSGF), 274 to 294 (GLPL…YFYL), and 319 to 339 (FTLI…LLPL).

Belongs to the complex I subunit 2 family.

It is found in the mitochondrion inner membrane. It catalyses the reaction a ubiquinone + NADH + 5 H(+)(in) = a ubiquinol + NAD(+) + 4 H(+)(out). Functionally, core subunit of the mitochondrial membrane respiratory chain NADH dehydrogenase (Complex I) that is believed to belong to the minimal assembly required for catalysis. Complex I functions in the transfer of electrons from NADH to the respiratory chain. The immediate electron acceptor for the enzyme is believed to be ubiquinone. The protein is NADH-ubiquinone oxidoreductase chain 2 (MT-ND2) of Salmo salar (Atlantic salmon).